A 319-amino-acid chain; its full sequence is Class I histocompatibility antigen, Non-RT1.A alpha-1 chain (319 aa).

A signal peptide spans 1–24; that stretch reads MGAMAPRTLLLLLAAVLAPTQTWA. Residues 25–114 form an alpha-1 region; it reads GSHSLRYFHT…LLSYYNQSEG (90 aa). Over 25–307 the chain is Extracellular; it reads GSHSLRYFHT…WEPSPSTDSN (283 aa). A glycan (N-linked (GlcNAc...) asparagine) is linked at N110. The interval 115 to 206 is alpha-2; the sequence is GSHTIQRMYG…ERGKETLLRS (92 aa). Cystine bridges form between C125–C188 and C227–C283. The segment at 207–298 is alpha-3; the sequence is DPPEAHVTLH…GLPEPLSQRW (92 aa). The Ig-like C1-type domain occupies 209–295; that stretch reads PEAHVTLHPR…EHEGLPEPLS (87 aa). N280 carries N-linked (GlcNAc...) asparagine glycosylation. Residues 299–307 are connecting peptide; the sequence is EPSPSTDSN. A helical transmembrane segment spans residues 308 to 319; sequence LLLLFLELWQFL.

This sequence belongs to the MHC class I family. As to quaternary structure, heterodimer of an alpha chain and a beta chain (beta-2-microglobulin).

The protein resides in the membrane. In terms of biological role, involved in the presentation of foreign antigens to the immune system. This Rattus norvegicus (Rat) protein is Class I histocompatibility antigen, Non-RT1.A alpha-1 chain (RT1-Aw2).